A 519-amino-acid chain; its full sequence is Asteroid homolog 1 (519 aa).

Belongs to the asteroid family.

Its subcellular location is the cytoplasm. It localises to the mitochondrion. The polypeptide is Asteroid homolog 1 (ast1) (Schizosaccharomyces pombe (strain 972 / ATCC 24843) (Fission yeast)).